A 325-amino-acid chain; its full sequence is Elongation factor P--(R)-beta-lysine ligase (325 aa).

Position 76–78 (76–78 (SPE)) interacts with substrate. Residues 100-102 (RNE) and N109 contribute to the ATP site. Y118 provides a ligand contact to substrate. Residue 244–245 (EL) coordinates ATP. E251 contacts substrate. Position 300 (G300) interacts with ATP.

The protein belongs to the class-II aminoacyl-tRNA synthetase family. EpmA subfamily. Homodimer.

It carries out the reaction D-beta-lysine + L-lysyl-[protein] + ATP = N(6)-((3R)-3,6-diaminohexanoyl)-L-lysyl-[protein] + AMP + diphosphate + H(+). Its function is as follows. With EpmB is involved in the beta-lysylation step of the post-translational modification of translation elongation factor P (EF-P). Catalyzes the ATP-dependent activation of (R)-beta-lysine produced by EpmB, forming a lysyl-adenylate, from which the beta-lysyl moiety is then transferred to the epsilon-amino group of a conserved specific lysine residue in EF-P. The protein is Elongation factor P--(R)-beta-lysine ligase of Hamiltonella defensa subsp. Acyrthosiphon pisum (strain 5AT).